The primary structure comprises 694 residues: Methionine--tRNA ligase (694 aa).

The 'HIGH' region motif lies at 12-22 (PYANGPLHLGH). Residues Cys-143, Cys-146, Cys-156, and Cys-159 each contribute to the Zn(2+) site. A 'KMSKS' region motif is present at residues 330 to 334 (KMSKS). Lys-333 provides a ligand contact to ATP. A disordered region spans residues 550 to 577 (LAAPATPATASKPAPAKADAKPAAAANP). Residues 551–575 (AAPATPATASKPAPAKADAKPAAAA) show a composition bias toward low complexity. The region spanning 591 to 694 (DFAKLDLRIG…SGAQPGMPVR (104 aa)) is the tRNA-binding domain.

The protein belongs to the class-I aminoacyl-tRNA synthetase family. MetG type 1 subfamily. As to quaternary structure, homodimer. The cofactor is Zn(2+).

The protein localises to the cytoplasm. The catalysed reaction is tRNA(Met) + L-methionine + ATP = L-methionyl-tRNA(Met) + AMP + diphosphate. Its function is as follows. Is required not only for elongation of protein synthesis but also for the initiation of all mRNA translation through initiator tRNA(fMet) aminoacylation. The protein is Methionine--tRNA ligase of Xanthomonas axonopodis pv. citri (strain 306).